The chain runs to 1497 residues: DNA-directed RNA polymerase subunit beta' (1497 aa).

The Zn(2+) site is built by C67, C69, C82, and C85. D499, D501, and D503 together coordinate Mg(2+). C867, C943, C950, and C953 together coordinate Zn(2+). Residues 1476–1497 (ESNATERVVEEPATREGFANER) are disordered. Residues 1482 to 1497 (RVVEEPATREGFANER) are compositionally biased toward basic and acidic residues.

The protein belongs to the RNA polymerase beta' chain family. In terms of assembly, the RNAP catalytic core consists of 2 alpha, 1 beta, 1 beta' and 1 omega subunit. When a sigma factor is associated with the core the holoenzyme is formed, which can initiate transcription. The cofactor is Mg(2+). Zn(2+) is required as a cofactor.

It carries out the reaction RNA(n) + a ribonucleoside 5'-triphosphate = RNA(n+1) + diphosphate. Functionally, DNA-dependent RNA polymerase catalyzes the transcription of DNA into RNA using the four ribonucleoside triphosphates as substrates. The polypeptide is DNA-directed RNA polymerase subunit beta' (Pelodictyon phaeoclathratiforme (strain DSM 5477 / BU-1)).